The primary structure comprises 200 residues: Phospholipase A2 inhibitor CNF (200 aa).

The signal sequence occupies residues 1–19; that stretch reads MKYLHTICLLFIFVARGNS. 8 cysteine pairs are disulfide-bonded: C22–C46, C25–C32, C39–C67, C73–C94, C95–C100, C118–C143, C136–C165, and C169–C191. The N-linked (GlcNAc...) asparagine; partial glycan is linked to N176.

As to quaternary structure, occurs as a mixture of oligomers. Tetrameric arrangement appears to be the predominant quaternary structure. Interacts with phospholipase A2 crotoxin basic subunit CBd; the interaction leads to dissociation of the CA-CB heterodimer and to inhibition of PLA2 activity of the CB subunit. In terms of processing, the carbohydrate moiety increases the inhibition capacity of CNF, but is not essential for activity and for oligomerization. As to expression, expressed by the liver.

The protein resides in the secreted. Functionally, inhibits the PLA2 activity of crotoxin (CTX) by replacing the acid subunit (CA) in the CTX complex. Displays a pro-inflammatory action through activation of important main signaling pathways for human leukocytes, in vitro. Abolishes both the muscle-paralyzing and muscle-damaging activities of CTX in mice phrenic nerve-diaphragm muscle preparations. The sequence is that of Phospholipase A2 inhibitor CNF from Crotalus durissus terrificus (South American rattlesnake).